Consider the following 389-residue polypeptide: Aspartic protease pepA (389 aa).

The first 20 residues, 1–20 (MVLINQLGAVLAVCATLTVA), serve as a signal peptide directing secretion. Residues 21-67 (APTKGKARFNVPQVAIPKKMVHHPAVSYARALHKFGMKVPKTVQDAA) constitute a propeptide, activation peptide. The Peptidase A1 domain occupies 82–386 (YVTQVTVGEG…DTQGPRIGFA (305 aa)). Aspartate 98 is an active-site residue. N-linked (GlcNAc...) asparagine glycosylation is present at asparagine 257. Residue aspartate 279 is part of the active site. A disulfide bridge connects residues cysteine 315 and cysteine 348.

It belongs to the peptidase A1 family. In terms of assembly, monomer.

It localises to the secreted. Its function is as follows. Secreted aspartic endopeptidase that allows assimilation of proteinaceous substrates. The scissile peptide bond is attacked by a nucleophilic water molecule activated by two aspartic residues in the active site. Shows a broad primary substrate specificity. Favors hydrophobic residues at the P1 and P1' positions. The protein is Aspartic protease pepA of Arthroderma otae (strain ATCC MYA-4605 / CBS 113480) (Microsporum canis).